A 377-amino-acid chain; its full sequence is P2Y purinoceptor 2 (377 aa).

At 1–32 (MAADLGPWNDTINGTWDGDELGYRCRFNEDFK) the chain is on the extracellular side. Asn9 and Asn13 each carry an N-linked (GlcNAc...) asparagine glycan. Residues 33-59 (YVLLPVSYGVVCVPGLCLNAVALYIFL) traverse the membrane as a helical segment. At 60–70 (CRLKTWNASTT) the chain is on the cytoplasmic side. A helical transmembrane segment spans residues 71 to 93 (YMFHLAVSDALYAASLPLLVYYY). The Extracellular segment spans residues 94–110 (ARGDHWPFSTVLCKLVR). A disulfide bridge connects residues Cys106 and Cys183. The helical transmembrane segment at 111–129 (FLFYTNLYCSILFLTCISV) threads the bilayer. The Cytoplasmic segment spans residues 130 to 152 (HRCLGVLRPLRSLRWGRARYARR). A helical membrane pass occupies residues 153 to 172 (VAGAVWVLVLACQAPVLYFV). The Extracellular portion of the chain corresponds to 173-194 (TTSARGGRVTCHDTSAPELFSR). The helical transmembrane segment at 195-220 (FVAYSSVMLGLLFAVPFAVILVCYVL) threads the bilayer. The Cytoplasmic portion of the chain corresponds to 221–246 (MARRLLKPAYGTSGGLPRAKRKSVRT). The helical transmembrane segment at 247–269 (IAVVLAVFALCFLPFHVTRTLYY) threads the bilayer. At 270–287 (SFRSLDLSCHTLNAINMA) the chain is on the extracellular side. The helical transmembrane segment at 288–309 (YKVTRPLASANSCLDPVLYFLA) threads the bilayer. The Cytoplasmic segment spans residues 310-377 (GQRLVRFARD…GSENTKDIRL (68 aa)). The segment at 318 to 377 (RDAKPPTGPSPATPARRRLGLRRSDRTDMQRIEDVLGSSEDSRRTESTPAGSENTKDIRL) is disordered. Residues 339–363 (RRSDRTDMQRIEDVLGSSEDSRRTE) show a composition bias toward basic and acidic residues.

This sequence belongs to the G-protein coupled receptor 1 family. In terms of tissue distribution, spleen, testis, kidney, liver, lung, heart and brain.

The protein localises to the cell membrane. Receptor for ATP and UTP coupled to G-proteins that activate a phosphatidylinositol-calcium second messenger system. The affinity range is UTP = ATP &gt; ATP-gamma-S &gt;&gt; 2-methylthio-ATP = ADP. In Homo sapiens (Human), this protein is P2Y purinoceptor 2 (P2RY2).